Consider the following 431-residue polypeptide: Glutamate-1-semialdehyde 2,1-aminomutase (431 aa).

The residue at position 265 (Lys-265) is an N6-(pyridoxal phosphate)lysine.

Belongs to the class-III pyridoxal-phosphate-dependent aminotransferase family. HemL subfamily. As to quaternary structure, homodimer. It depends on pyridoxal 5'-phosphate as a cofactor.

It is found in the cytoplasm. It catalyses the reaction (S)-4-amino-5-oxopentanoate = 5-aminolevulinate. Its pathway is porphyrin-containing compound metabolism; protoporphyrin-IX biosynthesis; 5-aminolevulinate from L-glutamyl-tRNA(Glu): step 2/2. This is Glutamate-1-semialdehyde 2,1-aminomutase from Pseudoalteromonas atlantica (strain T6c / ATCC BAA-1087).